Reading from the N-terminus, the 359-residue chain is Fructose-bisphosphate aldolase class 2 (359 aa).

Position 50 (Ser50) interacts with D-glyceraldehyde 3-phosphate. Asp83 acts as the Proton donor in catalysis. The Zn(2+) site is built by His84, Asp105, Glu142, and His198. Gly199 is a dihydroxyacetone phosphate binding site. Zn(2+) is bound at residue His232. Dihydroxyacetone phosphate-binding positions include 233–235 and 275–278; these read GSS and NIDT.

It belongs to the class II fructose-bisphosphate aldolase family. It depends on Zn(2+) as a cofactor.

The enzyme catalyses beta-D-fructose 1,6-bisphosphate = D-glyceraldehyde 3-phosphate + dihydroxyacetone phosphate. Its pathway is carbohydrate degradation; glycolysis; D-glyceraldehyde 3-phosphate and glycerone phosphate from D-glucose: step 4/4. Catalyzes the aldol condensation of dihydroxyacetone phosphate (DHAP or glycerone-phosphate) with glyceraldehyde 3-phosphate (G3P) to form fructose 1,6-bisphosphate (FBP) in gluconeogenesis and the reverse reaction in glycolysis. The protein is Fructose-bisphosphate aldolase class 2 (fbaA) of Synechocystis sp. (strain ATCC 27184 / PCC 6803 / Kazusa).